The chain runs to 128 residues: Ribonuclease P protein component 4 (128 aa).

Residues C67, C70, C96, and C99 each contribute to the Zn(2+) site.

It belongs to the eukaryotic/archaeal RNase P protein component 4 family. In terms of assembly, consists of a catalytic RNA component and at least 4-5 protein subunits. Zn(2+) is required as a cofactor.

The protein resides in the cytoplasm. It catalyses the reaction Endonucleolytic cleavage of RNA, removing 5'-extranucleotides from tRNA precursor.. Functionally, part of ribonuclease P, a protein complex that generates mature tRNA molecules by cleaving their 5'-ends. This chain is Ribonuclease P protein component 4, found in Methanopyrus kandleri (strain AV19 / DSM 6324 / JCM 9639 / NBRC 100938).